A 340-amino-acid chain; its full sequence is Galactoside alpha-(1,2)-fucosyltransferase 2 (340 aa).

Residues 1–7 (MLSMQAS) are Cytoplasmic-facing. A helical; Signal-anchor for type II membrane protein membrane pass occupies residues 8–28 (FFFPTGPFILFVFTASTIFHL). The Lumenal segment spans residues 29–340 (QQRMVKIQPT…EADLSPLLKH (312 aa)). 4 N-linked (GlcNAc...) asparagine glycosylation sites follow: N185, N251, N279, and N305.

It is found in the golgi apparatus. The protein resides in the golgi stack membrane. The enzyme catalyses a beta-D-galactosyl-(1-&gt;3)-N-acetyl-beta-D-glucosaminyl derivative + GDP-beta-L-fucose = an alpha-L-Fuc-(1-&gt;2)-beta-D-Gal-(1-&gt;3)-beta-D-GlcNAc derivative + GDP + H(+). It carries out the reaction a beta-D-galactosyl-(1-&gt;4)-N-acetyl-beta-D-glucosaminyl derivative + GDP-beta-L-fucose = an alpha-L-Fuc-(1-&gt;2)-beta-D-Gal-(1-&gt;4)-beta-D-GlcNAc derivative + GDP + H(+). It catalyses the reaction a neolactoside nLc4Cer + GDP-beta-L-fucose = a neolactoside IV(2)-alpha-Fuc-nLc4Cer + GDP + H(+). The catalysed reaction is a neolactoside nLc4Cer(d18:1(4E)) + GDP-beta-L-fucose = a neolactoside IV(2)-alpha-Fuc-nLc4Cer(d18:1(4E)) + GDP + H(+). The enzyme catalyses a ganglioside GM1 + GDP-beta-L-fucose = a ganglioside Fuc-GM1 + GDP + H(+). It carries out the reaction a ganglioside GA1 + GDP-beta-L-fucose = a ganglioside Fuc-GA1 + GDP + H(+). It catalyses the reaction Lc4Cer + GDP-beta-L-fucose = alpha-L-fucosyl-(1-&gt;2)-beta-D-galactosyl-(1-&gt;3)-N-acetyl-beta-D-glucosaminyl-(1-&gt;3)-beta-D-galactosyl-(1-&gt;4)-beta-D-glucosyl-(1&lt;-&gt;1')-ceramide + GDP + H(+). The catalysed reaction is a beta-D-Gal-(1-&gt;3)-beta-D-GlcNAc-(1-&gt;3)-beta-D-Gal-(1-&gt;4)-beta-D-Glc-(1&lt;-&gt;1')-Cer(d18:1(4E)) + GDP-beta-L-fucose = alpha-L-fucosyl-(1-&gt;2)- beta-D-galactosyl-(1-&gt;3)-N-acetyl-beta-D-glucosaminyl-(1-&gt;3)-beta-D-galactosyl-(1-&gt;4)-beta-D-glucosyl-(1&lt;-&gt;1')-N-acylsphing-4-enine + GDP + H(+). The enzyme catalyses a ganglioside GD1b + GDP-beta-L-fucose = a ganglioside Fuc-GD1b + GDP + H(+). It carries out the reaction a ganglioside GM1 (d18:1(4E)) + GDP-beta-L-fucose = a ganglioside Fuc-GM1 (d18:1(4E)) + GDP + H(+). It catalyses the reaction a globoside GalGb4Cer (d18:1(4E)) + GDP-beta-L-fucose = a globoside Globo-H (d18:1(4E)) + GDP + H(+). The catalysed reaction is a lactoside III(4)-a-Fuc-Lc4Cer + GDP-beta-L-fucose = a lactoside IV(2),III(4)-a-[Fuc]2-Lc4Cer + GDP + H(+). The enzyme catalyses beta-D-galactosyl-(1-&gt;3)-N-acetyl-D-galactosamine + GDP-beta-L-fucose = alpha-L-fucosyl-(1-&gt;2)-beta-D-galactosyl-(1-&gt;3)-N-acetyl-D-galactosamine + GDP + H(+). Its pathway is protein modification; protein glycosylation. Catalyzes the transfer of L-fucose, from a guanosine diphosphate-beta-L-fucose, to the terminal galactose on both O- and N-linked glycans chains of cell surface glycoproteins and glycolipids and the resulting epitope regulates several processes such as cell-cell interaction including host-microbe interaction, cell surface expression and cell proliferation. Preferentially fucosylates gangliosides GA1 and GM1 in the antrum, cecum and colon and in the female reproductive organs. Fucosylated host glycoproteins or glycolipids mediate interaction with intestinal microbiota influencing its composition. Creates a soluble precursor oligosaccharide FuC-alpha ((1,2)Galbeta-) called the H antigen which is an essential substrate for the final step in the soluble ABO blood group antigen synthesis pathway. This Sus scrofa (Pig) protein is Galactoside alpha-(1,2)-fucosyltransferase 2.